The primary structure comprises 363 residues: tRNA(Met) cytidine acetate ligase (363 aa).

ATP is bound by residues 7-20 (IAEY…HKYL), G96, N152, and R175.

It belongs to the TmcAL family.

It is found in the cytoplasm. The enzyme catalyses cytidine(34) in elongator tRNA(Met) + acetate + ATP = N(4)-acetylcytidine(34) in elongator tRNA(Met) + AMP + diphosphate. Catalyzes the formation of N(4)-acetylcytidine (ac(4)C) at the wobble position of elongator tRNA(Met), using acetate and ATP as substrates. First activates an acetate ion to form acetyladenylate (Ac-AMP) and then transfers the acetyl group to tRNA to form ac(4)C34. The chain is tRNA(Met) cytidine acetate ligase from Streptococcus suis (strain 98HAH33).